Consider the following 524-residue polypeptide: RNA-splicing ligase RtcB homolog 1 (524 aa).

Residues aspartate 141, cysteine 144, histidine 249, histidine 281, and histidine 372 each contribute to the Mn(2+) site. 248–252 (NHYLE) is a GMP binding site. GMP is bound by residues 372-373 (HN), 421-424 (GGSM), serine 428, 447-450 (HGAG), and lysine 523. The GMP-histidine intermediate role is filled by histidine 447.

It belongs to the RtcB family. As to quaternary structure, catalytic component of the tRNA-splicing ligase complex. The cofactor is Mn(2+).

The catalysed reaction is a 3'-end 3'-phospho-ribonucleotide-RNA + a 5'-end dephospho-ribonucleoside-RNA + GTP = a ribonucleotidyl-ribonucleotide-RNA + GMP + diphosphate. It catalyses the reaction a 3'-end 2',3'-cyclophospho-ribonucleotide-RNA + a 5'-end dephospho-ribonucleoside-RNA + GTP + H2O = a ribonucleotidyl-ribonucleotide-RNA + GMP + diphosphate + H(+). In terms of biological role, catalytic subunit of the tRNA-splicing ligase complex that acts by directly joining spliced tRNA halves to mature-sized tRNAs by incorporating the precursor-derived splice junction phosphate into the mature tRNA as a canonical 3',5'-phosphodiester. May act as an RNA ligase with broad substrate specificity, and may function toward other RNAs. The chain is RNA-splicing ligase RtcB homolog 1 from Entamoeba histolytica (strain ATCC 30459 / HM-1:IMSS / ABRM).